Consider the following 505-residue polypeptide: MVNKDVKQTTAFGAPVWDDNNVITAGPRGPVLLQSTWFLEKLAAFDRERIPERVVHAKGSGAYGTFTVTKDITKYTKAKIFSKVGKKTECFFRFSTVAGEKGSADAVRDPRGFAMKYYTEEGNWDLVGNNTPVFFIRDAIKFPDFIHTQKRDPQTNLPNPDMVWDFWSNVPESLYQVTWVMSDRGIPKSFRHMDGFGSHTFSLINAKGERFWVKFHFETMQGVKHLTNEEAAEVRKYDPDSNQRDLFDAIAGGDFPKWKMSIQVMPEEDAKKYRFHPFDVTKIWYLQDYPLMEVGIVELNKNPENYFAEVEQAAFTPANVVPGIGYSPDRMLQGRLFSYGDTHRYRLGVNYPQIPVNRPRCPFHSSSRDGYMQNGYYGSLQNYTPSSLPGYKEDKSARDPKFNLAHIEKEFEVWNWDYRAEDSDYYTQPGDYYRSLPADEKERLYDTIGGSLAHVTHKEIVDKQLEHFKKADPKYAEGVKKALEKHQKMMKDMHAKDMHHMKKKK.

Catalysis depends on residues His-56 and Asn-129. Tyr-339 lines the heme pocket.

This sequence belongs to the catalase family. The cofactor is heme.

It localises to the cytoplasm. The catalysed reaction is 2 H2O2 = O2 + 2 H2O. Its function is as follows. Decomposes hydrogen peroxide into water and oxygen; serves to protect cells from the toxic effects of hydrogen peroxide. The polypeptide is Catalase (katA) (Helicobacter pylori (strain J99 / ATCC 700824) (Campylobacter pylori J99)).